Consider the following 326-residue polypeptide: Mitochondrial substrate carrier family protein R (326 aa).

Solcar repeat units follow at residues 9-95 (TSPM…LKNN), 101-214 (KSSV…FKRI), and 226-318 (VIGI…LCDY). 6 consecutive transmembrane segments (helical) span residues 12-32 (MVTLLAGGVSGVIAKSTIAPL), 64-84 (LAGLWKGNTATILRIFPYSAI), 104-124 (VQIFIAGSLGFSCAILLTYPL), 185-205 (GIWRGILPTLYGSIPYAGVGY), 226-246 (VIGIYKLISGGVAGGLGQTAA), and 290-310 (LFKGISINYIKVIPTNGVAFL).

This sequence belongs to the mitochondrial carrier (TC 2.A.29) family.

It is found in the mitochondrion inner membrane. In terms of biological role, mitochondrial solute carriers shuttle metabolites, nucleotides, and cofactors through the mitochondrial inner membrane. May be involved in the accumulation of coenzyme A in the mitochondrial matrix. This is Mitochondrial substrate carrier family protein R (mcfR) from Dictyostelium discoideum (Social amoeba).